Consider the following 293-residue polypeptide: RNA pseudouridylate synthase domain-containing protein 1 (293 aa).

Residue Asp-67 is part of the active site.

This sequence belongs to the pseudouridine synthase RluA family.

The protein is RNA pseudouridylate synthase domain-containing protein 1 (rpusd1) of Danio rerio (Zebrafish).